The sequence spans 77 residues: MSKLCQITGKKPMMGNKVSHANNKTKRIFNLNLSKKRFFIKKKWILLKVSSAGIKTINKFGIEKTLKKLNFNVKKKY.

This sequence belongs to the bacterial ribosomal protein bL28 family.

The polypeptide is Large ribosomal subunit protein bL28 (Karelsulcia muelleri (strain GWSS) (Sulcia muelleri)).